The primary structure comprises 870 residues: Dynamin-2 (870 aa).

The Dynamin-type G domain occupies 28–294; that stretch reads HLDLPQIAVV…LTNHIRESLP (267 aa). The segment at 38 to 45 is G1 motif; it reads GGQSAGKS. GDP is bound by residues serine 41, glycine 43, lysine 44, serine 45, serine 46, arginine 59, and glycine 60. The G2 motif stretch occupies residues 64-66; that stretch reads VTR. Residues 136 to 139 are G3 motif; it reads DLPG. A G4 motif region spans residues 205-208; that stretch reads TKLD. GDP contacts are provided by lysine 206, aspartate 208, and aspartate 211. Tyrosine 231 carries the post-translational modification Phosphotyrosine. Residues 235 to 238 form a G5 motif region; sequence VNRS. Residues asparagine 236, arginine 237, and glutamine 239 each contribute to the GDP site. An N6-acetyllysine modification is found at lysine 299. Residues 519–625 enclose the PH domain; that stretch reads LVIRRGWLTI…WKASFLRAGV (107 aa). Tyrosine 597 is modified (phosphotyrosine). At lysine 598 the chain carries N6-acetyllysine. One can recognise a GED domain in the interval 653-744; the sequence is VETIRNLVDS…IIGDISTSTV (92 aa). Residues 741–870 are disordered; it reads TSTVSTPVPP…IRPAEPSLLD (130 aa). At threonine 755 the chain carries Phosphothreonine. Polar residues predominate over residues 756 to 767; that stretch reads WLQNTSGHSPTP. At serine 764 the chain carries Phosphoserine; by CDK1. Residues 826 to 846 show a composition bias toward pro residues; that stretch reads SAPPQIPSRPARIPPGIPPGV. Positions 847–864 are enriched in low complexity; the sequence is PSRRAPAAPSRPTIIRPA.

The protein belongs to the TRAFAC class dynamin-like GTPase superfamily. Dynamin/Fzo/YdjA family. As to quaternary structure, oligomerizes into a helical polymer that self-assembles around the vesicle membrane, when associated to the menbrane through lipid binding. Interacts with SHANK1 and SHANK2. Interacts with SNX9. Interacts (via C-terminal proline-rich domain (PRD)) with SNX18 (via SH3 domain); this interaction regulates ATG9A and ATG16L1 trafficking from recycling endosomes to sites of autophagosome formation. Interacts with SNX33 (via SH3 domain). Interacts with MYO1E (via SH3 domain). Interacts with PSTPIP1 (via SH3 domain). Interacts with CTNND2. Interacts (via C-terminal proline-rich domain (PRD)) with BIN1 (via SH3 domain); this interaction allows the recruitment of DNM2 to the membrane tubules and inhibits self-assembly-stimulated GTPase activity on the membrane. Interacts with GABARAP, GABARAPL1 and GABARAPL2. Interacts with MAP1LC3B (the lipidate and non-lipidated LC3 form); this interaction mediates recycling endosome scission leading to autophagosome release. Interacts with ITSN1. Interacts (via C-terminal proline-rich domain (PRD)) with SH3BP4 (via SH3 domain); this interaction controls the GTPase activity and is prevented by EGFR-induced tyrosine phosphorylation of either DNM2 or SH3BP4. Interacts with MYOF. May interact with PIK3C3. May be a component of a complex composed of RAB5A (in GDP-bound form), DYN2 and PIK3C3. Interacts with SDC4; this interaction is markedly enhanced at focal ahesion site upon induction of focal adhesions and stress-fiber formation. Interacts with ACTN1. Interacts with CTTN; this interaction stimulates the intrinsic GTPase activity of DNM2 and stabilizes the association of DNM2 and actin filaments; in addition this interaction is stimulated by ligand binding to the receptor, leading to the recruitment of the DNM2-CTTN complex to the sequestered receptor-ligand complex to its internalization. Interacts with NOSTRIN (via SH3 domain); this interaction allows the recruitment of NOS3 to dynamin-positive structures. Interacts with TUBG1; this interaction may participate in centrosome cohesion. In terms of processing, phosphorylation at Ser-848 by GSK3-alpha relieves the inhibition of BIN1 and promotes endocytosis. Phosphorylation at Ser-764 by CDK1 is greatly increased upon mitotic entry. It regulates cytokinesis downstream of calcineurin, and does not affect clathrin-mediated endocytosis. Dephosphorylated by calcineurin/PP2 during cytokinesis in a Ca(2+)- and calmodulin-dependent manner. Phosphorylated on tyrosine residues by EGFR. Phosphorylated on tyrosine residues after activation of SRC. In terms of tissue distribution, expressed in most tissues during embryonic development, including the peripheral nervous system although no expression is evident in skeletal muscle or heart.

The protein localises to the cytoplasm. It localises to the cytoskeleton. Its subcellular location is the cytoplasmic vesicle. It is found in the clathrin-coated vesicle. The protein resides in the cell projection. The protein localises to the uropodium. It localises to the endosome. Its subcellular location is the microtubule organizing center. It is found in the centrosome. The protein resides in the centriole. The protein localises to the recycling endosome. It localises to the phagocytic cup. Its subcellular location is the phagosome membrane. It is found in the podosome. The protein resides in the cell junction. The protein localises to the postsynaptic density. It localises to the synapse. Its subcellular location is the synaptosome. It is found in the midbody. The protein resides in the membrane. The protein localises to the clathrin-coated pit. It catalyses the reaction GTP + H2O = GDP + phosphate + H(+). Catalyzes the hydrolysis of GTP and utilizes this energy to mediate vesicle scission at plasma membrane during endocytosis and filament remodeling at many actin structures during organization of the actin cytoskeleton. Plays an important role in vesicular trafficking processes, namely clathrin-mediated endocytosis (CME), exocytic and clathrin-coated vesicle from the trans-Golgi network, and PDGF stimulated macropinocytosis. During vesicular trafficking process, associates to the membrane, through lipid binding, and self-assembles into ring-like structure through oligomerization to form a helical polymer around the vesicle membrane and leading to vesicle scission. Plays a role in organization of the actin cytoskeleton by mediating arrangement of stress fibers and actin bundles in podocytes. During organization of the actin cytoskeleton, self-assembles into ring-like structure that directly bundles actin filaments to form typical membrane tubules decorated with dynamin spiral polymers. Self-assembly increases GTPase activity and the GTP hydrolysis causes the rapid depolymerization of dynamin spiral polymers, and results in dispersion of actin bundles. Remodels, through its interaction with CTTN, bundled actin filaments in a GTPase-dependent manner and plays a role in orchestrating the global actomyosin cytoskeleton. The interaction with CTTN stabilizes the interaction of DNM2 and actin filaments and stimulates the intrinsic GTPase activity that results in actin filament-barbed ends and increases the sensitivity of filaments in bundles to the actin depolymerizing factor, CFL1. Plays a role in the autophagy process, by participating in the formation of ATG9A vesicles destined for the autophagosomes through its interaction with SNX18, by mediating recycling endosome scission leading to autophagosome release through MAP1LC3B interaction. Also regulates maturation of apoptotic cell corpse-containing phagosomes by recruiting PIK3C3 to the phagosome membrane. Also plays a role in cytokinesis. May participate in centrosome cohesion through its interaction with TUBG1. Plays a role in the regulation of neuron morphology, axon growth and formation of neuronal growth cones. Involved in membrane tubulation. In Mus musculus (Mouse), this protein is Dynamin-2.